The primary structure comprises 439 residues: Xaa-Pro dipeptidase (439 aa).

5 residues coordinate Mn(2+): D244, D255, H335, E380, and E419.

The protein belongs to the peptidase M24B family. Bacterial-type prolidase subfamily. The cofactor is Mn(2+).

It catalyses the reaction Xaa-L-Pro dipeptide + H2O = an L-alpha-amino acid + L-proline. Functionally, splits dipeptides with a prolyl residue in the C-terminal position. This chain is Xaa-Pro dipeptidase, found in Shewanella sp. (strain ANA-3).